Consider the following 352-residue polypeptide: Maleylacetate reductase (352 aa).

This sequence belongs to the iron-containing alcohol dehydrogenase family.

The enzyme catalyses 3-oxoadipate + NAD(+) = maleylacetate + NADH + H(+). It carries out the reaction 3-oxoadipate + NADP(+) = maleylacetate + NADPH + H(+). Its pathway is xenobiotic degradation; (2,4,5-trichlorophenoxy)acetate degradation. This chain is Maleylacetate reductase (tftE), found in Burkholderia cepacia (Pseudomonas cepacia).